Reading from the N-terminus, the 202-residue chain is dITP/XTP pyrophosphatase (202 aa).

A substrate-binding site is contributed by 7–12 (SRNEAK). D68 acts as the Proton acceptor in catalysis. D68 contributes to the Mg(2+) binding site. Substrate is bound by residues S69, 156–159 (FGYD), K179, and 184–185 (HR).

This sequence belongs to the HAM1 NTPase family. Homodimer. The cofactor is Mg(2+).

It catalyses the reaction XTP + H2O = XMP + diphosphate + H(+). The enzyme catalyses dITP + H2O = dIMP + diphosphate + H(+). It carries out the reaction ITP + H2O = IMP + diphosphate + H(+). Functionally, pyrophosphatase that catalyzes the hydrolysis of nucleoside triphosphates to their monophosphate derivatives, with a high preference for the non-canonical purine nucleotides XTP (xanthosine triphosphate), dITP (deoxyinosine triphosphate) and ITP. Seems to function as a house-cleaning enzyme that removes non-canonical purine nucleotides from the nucleotide pool, thus preventing their incorporation into DNA/RNA and avoiding chromosomal lesions. The protein is dITP/XTP pyrophosphatase of Frankia alni (strain DSM 45986 / CECT 9034 / ACN14a).